We begin with the raw amino-acid sequence, 457 residues long: Argininosuccinate lyase (457 aa).

The protein belongs to the lyase 1 family. Argininosuccinate lyase subfamily.

Its subcellular location is the cytoplasm. The enzyme catalyses 2-(N(omega)-L-arginino)succinate = fumarate + L-arginine. It participates in amino-acid biosynthesis; L-arginine biosynthesis; L-arginine from L-ornithine and carbamoyl phosphate: step 3/3. The chain is Argininosuccinate lyase from Haemophilus influenzae (strain ATCC 51907 / DSM 11121 / KW20 / Rd).